We begin with the raw amino-acid sequence, 338 residues long: tRNA N6-adenosine threonylcarbamoyltransferase (338 aa).

Fe cation contacts are provided by histidine 111 and histidine 115. Residues 133–137 (LVSGG), aspartate 166, glycine 179, aspartate 183, and asparagine 275 contribute to the substrate site. Aspartate 300 contacts Fe cation.

The protein belongs to the KAE1 / TsaD family. The cofactor is Fe(2+).

The protein resides in the cytoplasm. It carries out the reaction L-threonylcarbamoyladenylate + adenosine(37) in tRNA = N(6)-L-threonylcarbamoyladenosine(37) in tRNA + AMP + H(+). Its function is as follows. Required for the formation of a threonylcarbamoyl group on adenosine at position 37 (t(6)A37) in tRNAs that read codons beginning with adenine. Is involved in the transfer of the threonylcarbamoyl moiety of threonylcarbamoyl-AMP (TC-AMP) to the N6 group of A37, together with TsaE and TsaB. TsaD likely plays a direct catalytic role in this reaction. This chain is tRNA N6-adenosine threonylcarbamoyltransferase, found in Treponema denticola (strain ATCC 35405 / DSM 14222 / CIP 103919 / JCM 8153 / KCTC 15104).